A 254-amino-acid polypeptide reads, in one-letter code: 3-deoxy-manno-octulosonate cytidylyltransferase (254 aa).

It belongs to the KdsB family.

It is found in the cytoplasm. The catalysed reaction is 3-deoxy-alpha-D-manno-oct-2-ulosonate + CTP = CMP-3-deoxy-beta-D-manno-octulosonate + diphosphate. It participates in nucleotide-sugar biosynthesis; CMP-3-deoxy-D-manno-octulosonate biosynthesis; CMP-3-deoxy-D-manno-octulosonate from 3-deoxy-D-manno-octulosonate and CTP: step 1/1. Its pathway is bacterial outer membrane biogenesis; lipopolysaccharide biosynthesis. Activates KDO (a required 8-carbon sugar) for incorporation into bacterial lipopolysaccharide in Gram-negative bacteria. The protein is 3-deoxy-manno-octulosonate cytidylyltransferase of Pseudomonas putida (strain GB-1).